Consider the following 388-residue polypeptide: Mannitol-1-phosphate 5-dehydrogenase (388 aa).

An NAD(+)-binding site is contributed by 5-16 (AIQFGGGNIGRG). Lys213 is an active-site residue.

Belongs to the mannitol dehydrogenase family. Monomer.

It catalyses the reaction D-mannitol 1-phosphate + NAD(+) = beta-D-fructose 6-phosphate + NADH + H(+). Its function is as follows. Catalyzes the NAD(H)-dependent interconversion of D-fructose 6-phosphate and D-mannitol 1-phosphate in the mannitol metabolic pathway. Has a strong preference for NADH over NADPH. Required for protection of conidiospores against exogenous stresses such as high temperatures and an oxidative environment. This Aspergillus niger protein is Mannitol-1-phosphate 5-dehydrogenase (mpdA).